We begin with the raw amino-acid sequence, 270 residues long: MTPKVFYISDGTAITAEVFGHAVLSQFPIEFEALTIPFVETIQKAQKVKQQINDCFITTGERPLVFHSIINPEIRNVIFSSECVDYDFLNTFVAPLEQHLGVQAKPLLHRTHGKSNHGYETRIDAINYTMENDDGQTMKHMDKADIILLGVSRCGKTPSSLYLSMQFGIKAANYPFTEEDMDNLKLPEALKRNKSKLFGLTIDPHRLHEIRQSRMENSRYSSLRQCRLEVKEVEMLYKKERIPFVNTTNHSVEEIATKILDITGLERHMF.

Glycine 150 to threonine 157 provides a ligand contact to ADP.

This sequence belongs to the pyruvate, phosphate/water dikinase regulatory protein family. PSRP subfamily.

The enzyme catalyses [pyruvate, water dikinase] + ADP = [pyruvate, water dikinase]-phosphate + AMP + H(+). It carries out the reaction [pyruvate, water dikinase]-phosphate + phosphate + H(+) = [pyruvate, water dikinase] + diphosphate. Its function is as follows. Bifunctional serine/threonine kinase and phosphorylase involved in the regulation of the phosphoenolpyruvate synthase (PEPS) by catalyzing its phosphorylation/dephosphorylation. This Shewanella frigidimarina (strain NCIMB 400) protein is Putative phosphoenolpyruvate synthase regulatory protein.